The primary structure comprises 388 residues: Succinate--CoA ligase [ADP-forming] subunit beta (388 aa).

The 236-residue stretch at 9-244 (KQLFARYGLP…QSQEDPREAQ (236 aa)) folds into the ATP-grasp domain. ATP contacts are provided by residues Lys-46, 53–55 (GRG), Glu-99, Thr-102, and Glu-107. Asn-199 and Asp-213 together coordinate Mg(2+). Substrate-binding positions include Asn-264 and 321–323 (GIV).

It belongs to the succinate/malate CoA ligase beta subunit family. As to quaternary structure, heterotetramer of two alpha and two beta subunits. Mg(2+) serves as cofactor.

It carries out the reaction succinate + ATP + CoA = succinyl-CoA + ADP + phosphate. It catalyses the reaction GTP + succinate + CoA = succinyl-CoA + GDP + phosphate. It participates in carbohydrate metabolism; tricarboxylic acid cycle; succinate from succinyl-CoA (ligase route): step 1/1. Functionally, succinyl-CoA synthetase functions in the citric acid cycle (TCA), coupling the hydrolysis of succinyl-CoA to the synthesis of either ATP or GTP and thus represents the only step of substrate-level phosphorylation in the TCA. The beta subunit provides nucleotide specificity of the enzyme and binds the substrate succinate, while the binding sites for coenzyme A and phosphate are found in the alpha subunit. This is Succinate--CoA ligase [ADP-forming] subunit beta from Enterobacter sp. (strain 638).